We begin with the raw amino-acid sequence, 215 residues long: Abscisic acid receptor PYL6 (215 aa).

The tract at residues 54 to 209 is START-like; that stretch reads HVVGPSQCFS…NLQSLAKLAE (156 aa). A disulfide bond links C61 and C190. Residues K90, 120–125, 147–153, and E174 each bind abscisate; these read AAFSLE and RLMNYKS. The Gate loop signature appears at 116 to 120; that stretch reads SGLPA. The Latch loop signature appears at 146–148; sequence HRL.

The protein belongs to the PYR/PYL/RCAR abscisic acid intracellular receptor family. As to quaternary structure, monomer. Homodimer. Binds ABA on one subunit only. Interacts with HAB1, ABI1 and ABI2, and possibly with other PP2Cs. Binds to CARs protein in an ABA-independent manner, both at the plasma membrane and in the nucleus. Interacts directly with CAR1 and CAR4. Interacts with MYC2 in the nucleus. Interaction with MYC2 is increased in the presence of abscisic acid.

Its subcellular location is the cytoplasm. It is found in the nucleus. It localises to the cell membrane. Functionally, receptor for abscisic acid (ABA) required for ABA-mediated responses such as stomatal closure and germination inhibition. Inhibits the activity of group-A protein phosphatases type 2C (PP2Cs) in an ABA-independent manner but more efficiently when activated by ABA. Can be activated by both (-)-ABA and (+)-ABA. May link ABA and jasmonate signaling pathways by modifying MYC2 transcriptional activity, and regulation of JAZ6 and JAZ8 gene expression by MYC2. The polypeptide is Abscisic acid receptor PYL6 (PYL6) (Arabidopsis thaliana (Mouse-ear cress)).